The sequence spans 69 residues: Putative membrane protein insertion efficiency factor (69 aa).

The protein belongs to the UPF0161 family.

The protein resides in the cell inner membrane. Could be involved in insertion of integral membrane proteins into the membrane. The chain is Putative membrane protein insertion efficiency factor from Nitrosomonas eutropha (strain DSM 101675 / C91 / Nm57).